The primary structure comprises 528 residues: Protein WHAT'S THIS FACTOR 1 homolog, chloroplastic (528 aa).

Residues 1–73 (MEPKLLLSAH…KTRVVVEPVR (73 aa)) constitute a chloroplast transit peptide. In terms of domain architecture, PORR spans 80-408 (KELTFDSVVQ…VKEKMRALVS (329 aa)). The disordered stretch occupies residues 410–528 (PRFPRRGGPR…FPDGTPREKW (119 aa)). Over residues 418 to 428 (PRKDEEGREVE) the composition is skewed to basic and acidic residues. The span at 429–491 (IDGSDADGEE…DDDDEDEEED (63 aa)) shows a compositional bias: acidic residues.

It is found in the plastid. Its subcellular location is the chloroplast. Functionally, RNA-binding protein involved in group II intron splicing. Binds specific group II introns and promotes their splicing. Functions in the context of a heterodimer with the ribonuclease III domain-containing protein RNC1. The chain is Protein WHAT'S THIS FACTOR 1 homolog, chloroplastic from Arabidopsis thaliana (Mouse-ear cress).